Reading from the N-terminus, the 535-residue chain is CTP synthase (535 aa).

The amidoligase domain stretch occupies residues 1–267 (MTKYIFVTGG…DQIVCDHLKL (267 aa)). Serine 13 lines the CTP pocket. Residue serine 13 coordinates UTP. 14-19 (SLGKGI) contributes to the ATP binding site. Tyrosine 54 is a binding site for L-glutamine. Aspartate 71 provides a ligand contact to ATP. 2 residues coordinate Mg(2+): aspartate 71 and glutamate 141. Residues 148 to 150 (DIE), 188 to 193 (KTKPTQ), and lysine 224 each bind CTP. UTP is bound by residues 188-193 (KTKPTQ) and lysine 224. 240–242 (RDA) is a binding site for ATP. Residues 292 to 534 (KIALVGKYVE…VSASITNKES (243 aa)) enclose the Glutamine amidotransferase type-1 domain. Glycine 354 contacts L-glutamine. Cysteine 381 acts as the Nucleophile; for glutamine hydrolysis in catalysis. L-glutamine-binding positions include 382–385 (LGMQ), glutamate 405, and arginine 462. Active-site residues include histidine 507 and glutamate 509.

Belongs to the CTP synthase family. As to quaternary structure, homotetramer.

It catalyses the reaction UTP + L-glutamine + ATP + H2O = CTP + L-glutamate + ADP + phosphate + 2 H(+). The enzyme catalyses L-glutamine + H2O = L-glutamate + NH4(+). It carries out the reaction UTP + NH4(+) + ATP = CTP + ADP + phosphate + 2 H(+). It functions in the pathway pyrimidine metabolism; CTP biosynthesis via de novo pathway; CTP from UDP: step 2/2. Allosterically activated by GTP, when glutamine is the substrate; GTP has no effect on the reaction when ammonia is the substrate. The allosteric effector GTP functions by stabilizing the protein conformation that binds the tetrahedral intermediate(s) formed during glutamine hydrolysis. Inhibited by the product CTP, via allosteric rather than competitive inhibition. Functionally, catalyzes the ATP-dependent amination of UTP to CTP with either L-glutamine or ammonia as the source of nitrogen. Regulates intracellular CTP levels through interactions with the four ribonucleotide triphosphates. In Bacillus mycoides (strain KBAB4) (Bacillus weihenstephanensis), this protein is CTP synthase.